The primary structure comprises 141 residues: Large ribosomal subunit protein uL11 (141 aa).

This sequence belongs to the universal ribosomal protein uL11 family. Part of the ribosomal stalk of the 50S ribosomal subunit. Interacts with L10 and the large rRNA to form the base of the stalk. L10 forms an elongated spine to which L12 dimers bind in a sequential fashion forming a multimeric L10(L12)X complex. Post-translationally, one or more lysine residues are methylated.

Functionally, forms part of the ribosomal stalk which helps the ribosome interact with GTP-bound translation factors. This Prochlorococcus marinus (strain MIT 9312) protein is Large ribosomal subunit protein uL11.